The primary structure comprises 398 residues: 1-deoxy-D-xylulose 5-phosphate reductoisomerase (398 aa).

The NADPH site is built by threonine 10, glycine 11, serine 12, isoleucine 13, glycine 36, lysine 37, asparagine 38, and asparagine 124. A 1-deoxy-D-xylulose 5-phosphate-binding site is contributed by lysine 125. Glutamate 126 contacts NADPH. Residue aspartate 150 participates in Mn(2+) binding. Residues serine 151, glutamate 152, serine 186, and histidine 209 each coordinate 1-deoxy-D-xylulose 5-phosphate. Glutamate 152 serves as a coordination point for Mn(2+). Glycine 215 is an NADPH binding site. Positions 222, 227, 228, and 231 each coordinate 1-deoxy-D-xylulose 5-phosphate. Glutamate 231 serves as a coordination point for Mn(2+).

Belongs to the DXR family. Homodimer. The cofactor is Mg(2+). Mn(2+) serves as cofactor.

The catalysed reaction is 2-C-methyl-D-erythritol 4-phosphate + NADP(+) = 1-deoxy-D-xylulose 5-phosphate + NADPH + H(+). Its pathway is isoprenoid biosynthesis; isopentenyl diphosphate biosynthesis via DXP pathway; isopentenyl diphosphate from 1-deoxy-D-xylulose 5-phosphate: step 1/6. In terms of biological role, catalyzes the NADPH-dependent rearrangement and reduction of 1-deoxy-D-xylulose-5-phosphate (DXP) to 2-C-methyl-D-erythritol 4-phosphate (MEP). This is 1-deoxy-D-xylulose 5-phosphate reductoisomerase from Salmonella paratyphi A (strain ATCC 9150 / SARB42).